We begin with the raw amino-acid sequence, 681 residues long: Sterile alpha motif domain-containing protein 11 (681 aa).

Disordered regions lie at residues 41 to 77 (RNLKKERTPSFSASDGDSDGSGPTCGRRPGLKQEDGP), 212 to 234 (YHLGLPSHGEDPPWHDPPHHLPS), 251 to 307 (GPSG…APHV), and 407 to 498 (LLAL…GAEG). Lys72 is covalently cross-linked (Glycyl lysine isopeptide (Lys-Gly) (interchain with G-Cter in SUMO2)). The segment covering 219–234 (HGEDPPWHDPPHHLPS) has biased composition (basic and acidic residues). Residues 412-423 (PQGPPGSGPPTP) are compositionally biased toward pro residues. A Phosphothreonine modification is found at Thr485. The region spanning 543-608 (WTVDDVCSFV…AQVARRLGRV (66 aa)) is the SAM domain. Residues 625 to 681 (LRAPERELGTGEQPLSPTTATSPYGGGHALAGQTSPKQENGTLALLPGAPDPSQPLC) are disordered. 2 stretches are compositionally biased toward polar residues: residues 637–646 (QPLSPTTATS) and 656–665 (GQTSPKQENG). The residue at position 640 (Ser640) is a Phosphoserine.

In terms of assembly, self-associates. Component of a Polycomb group (PcG) multiprotein PRC1-like complex. Interacts with SAMD7 and PHC2. As to expression, expressed in the outer and inner nuclear layers, ganglion cell layer and rod photoreceptors of the retina (at protein level). Widely expressed, showing the highest expression in kidney, prostate and retina.

The protein localises to the nucleus. Component of a Polycomb group (PcG) multiprotein PRC1-like complex, essential for establishing rod photoreceptor cell identity and function by silencing nonrod gene expression in developing rod photoreceptor cells. The sequence is that of Sterile alpha motif domain-containing protein 11 (SAMD11) from Homo sapiens (Human).